The sequence spans 909 residues: E3 ubiquitin-protein ligase HACE1 (909 aa).

The tract at residues 1–21 is N-terminal helix important for homodimerization; the sequence is MERAMEQLNRLTRSLRRARTV. ANK repeat units lie at residues 23–55, 64–93, 97–126, 130–159, 163–192, 196–226, and 228–253; these read LPEDNETAVYTLMPMVMADQHRSVSELLSNSKF, VKRSLLHIAANCGSVECLVLLLKKGANPNY, SGCTPLHLAARNGQKKCMSKLLEYSADVNI, EGLTAIHWLAVNGRTELLHDLVQHVSDVDV, MGQTALHVACQNGHKTTVQCLLDSGADINR, SGATPLYFACSHGQRDTAQILLLRGAKYLPD, and NGVTPLDLCVQGGYGETCEVLIQYHP. The segment at 398–433 is disordered; that stretch reads QDQDAASIPPFEPPGPGSYENLSTGTRESKPDALAG. Residues 574–909 enclose the HECT domain; that stretch reads NCAKLKQGIA…HCGSYGYTMA (336 aa). The active-site Glycyl thioester intermediate is the C876.

In terms of assembly, homodimer. The homodimer is autoinhibited and stabilized by its N-terminal helix. Interacts with RAB1 (RAB1A, RAB1B or RAB1C), RAB4 (RAB4A or RAB4B) and RAB11 (RAB11A or RAB11B); in a GTP-dependent manner. Interacts with the 26S proteasomal complex through the 20S core proteasomal subunit. Interacts with RARB. In terms of processing, autoubiquitinated. As to expression, expressed in multiple tissues including heart, brain and kidney.

The protein resides in the golgi apparatus. It is found in the golgi stack membrane. Its subcellular location is the cytoplasm. It localises to the endoplasmic reticulum. The enzyme catalyses S-ubiquitinyl-[E2 ubiquitin-conjugating enzyme]-L-cysteine + [acceptor protein]-L-lysine = [E2 ubiquitin-conjugating enzyme]-L-cysteine + N(6)-ubiquitinyl-[acceptor protein]-L-lysine.. It participates in protein modification; protein ubiquitination. Its activity is regulated as follows. Sterically autoinhibited in its dimeric state. Functionally, E3 ubiquitin-protein ligase involved in Golgi membrane fusion and regulation of small GTPases. Acts as a regulator of Golgi membrane dynamics during the cell cycle: recruited to Golgi membrane by Rab proteins and regulates postmitotic Golgi membrane fusion. Acts by mediating ubiquitination during mitotic Golgi disassembly, ubiquitination serving as a signal for Golgi reassembly later, after cell division. Specifically binds GTP-bound RAC1, mediating ubiquitination and subsequent degradation of active RAC1, thereby playing a role in host defense against pathogens. May also act as a transcription regulator via its interaction with RARB. This is E3 ubiquitin-protein ligase HACE1 (HACE1) from Homo sapiens (Human).